A 281-amino-acid polypeptide reads, in one-letter code: Large ribosomal subunit protein uL2 (281 aa).

A disordered region spans residues 223-255 (TVRGSVMNPNDHPHGGGEGRAPIGRKSPVTPWG).

It belongs to the universal ribosomal protein uL2 family. Part of the 50S ribosomal subunit. Forms a bridge to the 30S subunit in the 70S ribosome.

Its function is as follows. One of the primary rRNA binding proteins. Required for association of the 30S and 50S subunits to form the 70S ribosome, for tRNA binding and peptide bond formation. It has been suggested to have peptidyltransferase activity; this is somewhat controversial. Makes several contacts with the 16S rRNA in the 70S ribosome. This Mycoplasma capricolum subsp. capricolum (strain California kid / ATCC 27343 / NCTC 10154) protein is Large ribosomal subunit protein uL2.